A 350-amino-acid polypeptide reads, in one-letter code: Holliday junction branch migration complex subunit RuvB (350 aa).

Positions 1–182 are large ATPase domain (RuvB-L); that stretch reads MEDRIVTPLN…FGVLCPMDFY (182 aa). ATP is bound by residues Leu-21, Arg-22, Gly-63, Lys-66, Thr-67, Thr-68, 129–131, Arg-172, Tyr-182, and Arg-219; that span reads EDY. Thr-67 lines the Mg(2+) pocket. The interval 183–253 is small ATPAse domain (RuvB-S); it reads DQEELSEIVV…TSKAALELLE (71 aa). The segment at 256-350 is head domain (RuvB-H); sequence KEGFDSIDNK…KQSSLFDGEV (95 aa). The DNA site is built by Arg-311 and Arg-316.

It belongs to the RuvB family. Homohexamer. Forms an RuvA(8)-RuvB(12)-Holliday junction (HJ) complex. HJ DNA is sandwiched between 2 RuvA tetramers; dsDNA enters through RuvA and exits via RuvB. An RuvB hexamer assembles on each DNA strand where it exits the tetramer. Each RuvB hexamer is contacted by two RuvA subunits (via domain III) on 2 adjacent RuvB subunits; this complex drives branch migration. In the full resolvosome a probable DNA-RuvA(4)-RuvB(12)-RuvC(2) complex forms which resolves the HJ.

The protein resides in the cytoplasm. The catalysed reaction is ATP + H2O = ADP + phosphate + H(+). The RuvA-RuvB-RuvC complex processes Holliday junction (HJ) DNA during genetic recombination and DNA repair, while the RuvA-RuvB complex plays an important role in the rescue of blocked DNA replication forks via replication fork reversal (RFR). RuvA specifically binds to HJ cruciform DNA, conferring on it an open structure. The RuvB hexamer acts as an ATP-dependent pump, pulling dsDNA into and through the RuvAB complex. RuvB forms 2 homohexamers on either side of HJ DNA bound by 1 or 2 RuvA tetramers; 4 subunits per hexamer contact DNA at a time. Coordinated motions by a converter formed by DNA-disengaged RuvB subunits stimulates ATP hydrolysis and nucleotide exchange. Immobilization of the converter enables RuvB to convert the ATP-contained energy into a lever motion, pulling 2 nucleotides of DNA out of the RuvA tetramer per ATP hydrolyzed, thus driving DNA branch migration. The RuvB motors rotate together with the DNA substrate, which together with the progressing nucleotide cycle form the mechanistic basis for DNA recombination by continuous HJ branch migration. Branch migration allows RuvC to scan DNA until it finds its consensus sequence, where it cleaves and resolves cruciform DNA. This chain is Holliday junction branch migration complex subunit RuvB, found in Clostridium kluyveri (strain NBRC 12016).